We begin with the raw amino-acid sequence, 156 residues long: Endoribonuclease YbeY (156 aa).

Residues H122, H126, and H132 each contribute to the Zn(2+) site.

This sequence belongs to the endoribonuclease YbeY family. Zn(2+) is required as a cofactor.

The protein resides in the cytoplasm. Its function is as follows. Single strand-specific metallo-endoribonuclease involved in late-stage 70S ribosome quality control and in maturation of the 3' terminus of the 16S rRNA. In Bacillus cytotoxicus (strain DSM 22905 / CIP 110041 / 391-98 / NVH 391-98), this protein is Endoribonuclease YbeY.